We begin with the raw amino-acid sequence, 1495 residues long: Nuclear pore complex protein NUP160 (1495 aa).

In terms of assembly, part of the nuclear pore complex (NPC). The NPC has an eight-fold symmetrical structure comprising a central transport channel and two rings, the cytoplasmic and nuclear rings, to which eight filaments are attached. The cytoplasmic filaments have loose ends, while the nuclear filaments are joined in a distal ring, forming a nuclear basket. NPCs are highly dynamic in configuration and composition, and can be devided in 3 subcomplexes, the NUP62 subcomplex, the NUP107-160 subcomplex and the NUP93 subcomplex, containing approximately 30 different nucleoporin proteins. Expressed in roots, stems, anthers, siliques and vascular tissues of cotyledons, leaves and hypocotyls.

Its subcellular location is the nucleus membrane. The protein resides in the nucleus. The protein localises to the nuclear pore complex. Its function is as follows. Contributes to the transfer of mature mRNA from the nucleus to the cytosol. Required for both R gene-mediated and basal disease resistance. RNA export seems to play a critical role in stress responses and regulation of plant growth and development. Required for proper expression of factors associated with auxin signaling. This is Nuclear pore complex protein NUP160 from Arabidopsis thaliana (Mouse-ear cress).